Consider the following 1342-residue polypeptide: Putative aldehyde oxidase-like protein (1342 aa).

The tract at residues 1–23 (MSDCNSGGGERRPNARATDAPPV) is disordered. An FAD-binding PCMH-type domain is found at 221–408 (ISSPREGWYC…LSIFIPHWAS (188 aa)).

It belongs to the xanthine dehydrogenase family.

The protein is Putative aldehyde oxidase-like protein of Oryza sativa subsp. japonica (Rice).